The following is a 118-amino-acid chain: Ribonuclease P protein component (118 aa).

Belongs to the RnpA family. In terms of assembly, consists of a catalytic RNA component (M1 or rnpB) and a protein subunit.

The enzyme catalyses Endonucleolytic cleavage of RNA, removing 5'-extranucleotides from tRNA precursor.. Its function is as follows. RNaseP catalyzes the removal of the 5'-leader sequence from pre-tRNA to produce the mature 5'-terminus. It can also cleave other RNA substrates such as 4.5S RNA. The protein component plays an auxiliary but essential role in vivo by binding to the 5'-leader sequence and broadening the substrate specificity of the ribozyme. The chain is Ribonuclease P protein component from Photobacterium profundum (strain SS9).